Here is a 210-residue protein sequence, read N- to C-terminus: Probable GTP-binding protein EngB (210 aa).

Residues 25–199 (TGIEVAFAGR…RQKLDTWFSE (175 aa)) form the EngB-type G domain. GTP is bound by residues 33-40 (GRSNAGKS), 60-64 (GRTQL), 78-81 (DLPG), 145-148 (TKAD), and 178-180 (FSS). Residues S40 and T62 each coordinate Mg(2+).

It belongs to the TRAFAC class TrmE-Era-EngA-EngB-Septin-like GTPase superfamily. EngB GTPase family. Requires Mg(2+) as cofactor.

In terms of biological role, necessary for normal cell division and for the maintenance of normal septation. This Shigella boydii serotype 4 (strain Sb227) protein is Probable GTP-binding protein EngB.